The following is a 367-amino-acid chain: 2-aminoethylphosphonate--pyruvate transaminase (367 aa).

The residue at position 193 (lysine 193) is an N6-(pyridoxal phosphate)lysine.

The protein belongs to the class-V pyridoxal-phosphate-dependent aminotransferase family. PhnW subfamily. As to quaternary structure, homodimer. The cofactor is pyridoxal 5'-phosphate.

It catalyses the reaction (2-aminoethyl)phosphonate + pyruvate = phosphonoacetaldehyde + L-alanine. In terms of biological role, involved in phosphonate degradation. The polypeptide is 2-aminoethylphosphonate--pyruvate transaminase (Vibrio parahaemolyticus serotype O3:K6 (strain RIMD 2210633)).